The following is a 102-amino-acid chain: ATP-dependent Clp protease adapter protein ClpS (102 aa).

This sequence belongs to the ClpS family. As to quaternary structure, binds to the N-terminal domain of the chaperone ClpA.

Its function is as follows. Involved in the modulation of the specificity of the ClpAP-mediated ATP-dependent protein degradation. The protein is ATP-dependent Clp protease adapter protein ClpS of Shewanella putrefaciens (strain CN-32 / ATCC BAA-453).